Reading from the N-terminus, the 264-residue chain is Tryptophan synthase alpha chain (264 aa).

Active-site proton acceptor residues include Glu-44 and Asp-55.

Belongs to the TrpA family. Tetramer of two alpha and two beta chains.

It catalyses the reaction (1S,2R)-1-C-(indol-3-yl)glycerol 3-phosphate + L-serine = D-glyceraldehyde 3-phosphate + L-tryptophan + H2O. The protein operates within amino-acid biosynthesis; L-tryptophan biosynthesis; L-tryptophan from chorismate: step 5/5. In terms of biological role, the alpha subunit is responsible for the aldol cleavage of indoleglycerol phosphate to indole and glyceraldehyde 3-phosphate. This chain is Tryptophan synthase alpha chain, found in Lactiplantibacillus plantarum (strain ATCC BAA-793 / NCIMB 8826 / WCFS1) (Lactobacillus plantarum).